Reading from the N-terminus, the 288-residue chain is Polyamine aminopropyltransferase (288 aa).

Residues 9–238 (ETLHDQFGQY…GIMTFAWATD (230 aa)) form the PABS domain. Glutamine 33 lines the S-methyl-5'-thioadenosine pocket. Spermidine is bound by residues histidine 64 and aspartate 88. Residues glutamate 108 and 140–141 (DG) contribute to the S-methyl-5'-thioadenosine site. Residue aspartate 158 is the Proton acceptor of the active site. 158-161 (DCTD) is a spermidine binding site. An S-methyl-5'-thioadenosine-binding site is contributed by proline 165.

The protein belongs to the spermidine/spermine synthase family. In terms of assembly, homodimer or homotetramer.

It localises to the cytoplasm. The enzyme catalyses S-adenosyl 3-(methylsulfanyl)propylamine + putrescine = S-methyl-5'-thioadenosine + spermidine + H(+). It participates in amine and polyamine biosynthesis; spermidine biosynthesis; spermidine from putrescine: step 1/1. In terms of biological role, catalyzes the irreversible transfer of a propylamine group from the amino donor S-adenosylmethioninamine (decarboxy-AdoMet) to putrescine (1,4-diaminobutane) to yield spermidine. This is Polyamine aminopropyltransferase from Escherichia coli (strain UTI89 / UPEC).